The chain runs to 656 residues: Rab proteins geranylgeranyltransferase component A 2 (656 aa).

Disordered regions lie at residues 188-209 and 609-656; these read MHTVSDKDGDKDESKSTVEDKA and PPPN…HLQN. Residues 639–656 show a composition bias toward basic and acidic residues; that stretch reads ESSEESKNLESPEKHLQN. A Phosphoserine modification is found at Ser-649.

Belongs to the Rab GDI family. In terms of assembly, monomer. Heterotrimer composed of RABGGTA, RABGGTB and CHML; within this trimer, RABGGTA and RABGGTB form the catalytic component B, while CHML (component A) mediates Rab protein binding. Interacts with RAB1A, RAB7A and RAB27A, but has much lower affinity for RAB1A, RAB7A and RAB27A than CHM. Interacts with the non-phosphorylated forms of RAB3A, RAB3B, RAB3C, RAB3D, RAB5B, RAB5C, RAB8A, RAB8B, RAB10, RAB12, RAB35, and RAB43.

It localises to the cytoplasm. Its subcellular location is the cytosol. In terms of biological role, substrate-binding subunit (component A) of the Rab geranylgeranyltransferase (GGTase) complex. Binds unprenylated Rab proteins and presents the substrate peptide to the catalytic component B. The component A is thought to be regenerated by transferring its prenylated Rab back to the donor membrane. Less effective than CHM in supporting prenylation of Rab3 family. This Homo sapiens (Human) protein is Rab proteins geranylgeranyltransferase component A 2 (CHML).